The following is a 789-amino-acid chain: Glycerol-3-phosphate acyltransferase (789 aa).

The short motif at 275–280 is the HXXXXD motif element; that stretch reads SHRSYI.

The protein belongs to the GPAT/DAPAT family.

Its subcellular location is the cell membrane. It carries out the reaction sn-glycerol 3-phosphate + an acyl-CoA = a 1-acyl-sn-glycero-3-phosphate + CoA. Its pathway is phospholipid metabolism; CDP-diacylglycerol biosynthesis; CDP-diacylglycerol from sn-glycerol 3-phosphate: step 1/3. This Mycobacterium tuberculosis (strain ATCC 25177 / H37Ra) protein is Glycerol-3-phosphate acyltransferase.